A 172-amino-acid polypeptide reads, in one-letter code: 3-hydroxydecanoyl-[acyl-carrier-protein] dehydratase (172 aa).

The active site involves H71.

This sequence belongs to the thioester dehydratase family. FabA subfamily. Homodimer.

It localises to the cytoplasm. It catalyses the reaction a (3R)-hydroxyacyl-[ACP] = a (2E)-enoyl-[ACP] + H2O. The enzyme catalyses (3R)-hydroxydecanoyl-[ACP] = (2E)-decenoyl-[ACP] + H2O. It carries out the reaction (2E)-decenoyl-[ACP] = (3Z)-decenoyl-[ACP]. Its pathway is lipid metabolism; fatty acid biosynthesis. In terms of biological role, necessary for the introduction of cis unsaturation into fatty acids. Catalyzes the dehydration of (3R)-3-hydroxydecanoyl-ACP to E-(2)-decenoyl-ACP and then its isomerization to Z-(3)-decenoyl-ACP. Can catalyze the dehydratase reaction for beta-hydroxyacyl-ACPs with saturated chain lengths up to 16:0, being most active on intermediate chain length. The sequence is that of 3-hydroxydecanoyl-[acyl-carrier-protein] dehydratase from Pectobacterium atrosepticum (strain SCRI 1043 / ATCC BAA-672) (Erwinia carotovora subsp. atroseptica).